Consider the following 831-residue polypeptide: Zinc transporter ZIP10 (831 aa).

The signal sequence occupies residues 1-25 (MKVHMHTKFCLICLLTFIFHHCNHC). The disordered stretch occupies residues 126-318 (HNHQHSHNHL…RKREAPHVKN (193 aa)). A compositionally biased stretch (polar residues) spans 138-147 (ENQTVTSVST). Asparagine 139 is a glycosylation site (N-linked (GlcNAc...) asparagine). A compositionally biased stretch (basic and acidic residues) spans 152-171 (KCDPEKETVEVSVKSDDKHM). Basic residues predominate over residues 172-188 (HDHNHRLRHHHRLHHHL). Residues 189–198 (DHNNTHHFHN) show a composition bias toward basic and acidic residues. N-linked (GlcNAc...) asparagine glycans are attached at residues asparagine 198 and asparagine 218. The span at 211–221 (NEPSTETNKTQ) shows a compositional bias: polar residues. The segment covering 229–238 (PKGKRKKKGR) has biased composition (basic residues). Composition is skewed to basic and acidic residues over residues 256–273 (DQGEQYEHNRVHKPDRVH) and 281–315 (HLPERNGHDPGRGHQDLDPDNEGELRHTRKREAPH). The N-linked (GlcNAc...) asparagine glycan is linked to asparagine 339. 2 helical membrane-spanning segments follow: residues 411-431 (IISITVISLLSLLGVILVPII) and 438-458 (FLLTFLVALAVGTMSGDALLH). The disordered stretch occupies residues 464 to 484 (QGGHDHSHQHAHGHGHSHGHE). A helical transmembrane segment spans residues 495 to 515 (VLKGLVALGGIYLLFIIEHCI). A phosphothreonine mark is found at threonine 536 and threonine 553. The residue at position 591 (serine 591) is a Phosphoserine. A run of 4 helical transmembrane segments spans residues 687-707 (AIGAAFSAGLTGGISTSIAVF), 732-752 (IVYNLLSAMMAYIGMLIGTAV), 759-779 (ITLWIFAVTAGMFLYVALVDM), and 801-821 (FILQNLGLLFGFAIMLVIALY).

Belongs to the ZIP transporter (TC 2.A.5) family. Interacts with SLC39A6; which triggers cells to undergo EMT and mitosis. Found in a complex with SLC39A6, SLC39A10 and with the 'Ser-727' phosphorylated form of STAT3 throughout mitosis. Found in a complex with SLC39A6, SLC39A10 and with NCAM1; this complex controls NCAM1 phosphorylation and integration into focal adhesion complexes during epithelial-tomesenchymal transition. Found in a complex with SLC39A6, SLC39A10 and with GSK3B that controls NCAM1 phosphorylation. Post-translationally, undergoes N-terminal ectodomain shedding.

It is found in the cell membrane. The protein localises to the apical cell membrane. It catalyses the reaction Zn(2+)(in) = Zn(2+)(out). In terms of biological role, zinc-influx transporter. When associated with SLC39A6, the heterodimer formed by SLC39A10 and SLC39A6 mediates cellular zinc uptake to trigger cells to undergo epithelial-to-mesenchymal transition (EMT). SLC39A10-SLC39A6 heterodimers play also an essentiel role in initiating mitosis by importing zinc into cells to initiate a pathway resulting in the onset of mitosis. Plays an important for both mature B-cell maintenance and humoral immune responses. When associated with SLC39A10, the heterodimer controls NCAM1 phosphorylation and integration into focal adhesion complexes during EMT. This chain is Zinc transporter ZIP10, found in Homo sapiens (Human).